The primary structure comprises 427 residues: 4-hydroxy-3-methylbut-2-en-1-yl diphosphate synthase (flavodoxin) (427 aa).

[4Fe-4S] cluster-binding residues include C300, C303, C346, and E353.

This sequence belongs to the IspG family. It depends on [4Fe-4S] cluster as a cofactor.

It catalyses the reaction (2E)-4-hydroxy-3-methylbut-2-enyl diphosphate + oxidized [flavodoxin] + H2O + 2 H(+) = 2-C-methyl-D-erythritol 2,4-cyclic diphosphate + reduced [flavodoxin]. It participates in isoprenoid biosynthesis; isopentenyl diphosphate biosynthesis via DXP pathway; isopentenyl diphosphate from 1-deoxy-D-xylulose 5-phosphate: step 5/6. Functionally, converts 2C-methyl-D-erythritol 2,4-cyclodiphosphate (ME-2,4cPP) into 1-hydroxy-2-methyl-2-(E)-butenyl 4-diphosphate. The sequence is that of 4-hydroxy-3-methylbut-2-en-1-yl diphosphate synthase (flavodoxin) from Chromobacterium violaceum (strain ATCC 12472 / DSM 30191 / JCM 1249 / CCUG 213 / NBRC 12614 / NCIMB 9131 / NCTC 9757 / MK).